A 357-amino-acid chain; its full sequence is GTPase Obg (357 aa).

One can recognise an Obg domain in the interval 1 to 159 (MKFVDEAEIQ…RTLKLELKLL (159 aa)). Positions 160–343 (ADIGMLGFPN…IMKSAMTLFE (184 aa)) constitute an OBG-type G domain. GTP contacts are provided by residues 166-173 (GFPNVGKS), 191-195 (FTTLY), 213-216 (DVPG), 293-296 (NKAD), and 324-326 (SAV). Mg(2+) is bound by residues Ser-173 and Thr-193.

Belongs to the TRAFAC class OBG-HflX-like GTPase superfamily. OBG GTPase family. As to quaternary structure, monomer. Requires Mg(2+) as cofactor.

The protein localises to the cytoplasm. Functionally, an essential GTPase which binds GTP, GDP and possibly (p)ppGpp with moderate affinity, with high nucleotide exchange rates and a fairly low GTP hydrolysis rate. Plays a role in control of the cell cycle, stress response, ribosome biogenesis and in those bacteria that undergo differentiation, in morphogenesis control. The sequence is that of GTPase Obg from Xylella fastidiosa (strain M23).